A 64-amino-acid polypeptide reads, in one-letter code: UPF0337 protein SAB0772 (64 aa).

The tract at residues 1–40 (MADESKFEQAKGNVKETIGNVTDNKNLENEGKEDKASGKA) is disordered. Over residues 25–40 (KNLENEGKEDKASGKA) the composition is skewed to basic and acidic residues.

It belongs to the UPF0337 (CsbD) family.

The polypeptide is UPF0337 protein SAB0772 (Staphylococcus aureus (strain bovine RF122 / ET3-1)).